The sequence spans 261 residues: Cytochrome c oxidase subunit 3 (261 aa).

Topologically, residues 1–15 (MTHQTHAYHMVNPSP) are mitochondrial matrix. Residues 16-34 (WPLTGALSALLMTSGLIMW) form a helical membrane-spanning segment. Residues 35-40 (FHYNSM) lie on the Mitochondrial intermembrane side of the membrane. The chain crosses the membrane as a helical span at residues 41–66 (ALLTLGFTTNLLTMYQWWRDVIREGT). At 67–72 (FQGHHT) the chain is on the mitochondrial matrix side. A helical transmembrane segment spans residues 73–105 (PIVQKGLRYGMVLFIVSEVFFFAGFFWAFYHSS). Residues 106-128 (LAPTPELGGCWPPTGIIPLNPLE) are Mitochondrial intermembrane-facing. A helical membrane pass occupies residues 129–152 (VPLLNTSVLLASGVSITWAHHSLM). Residues 153 to 155 (EGN) are Mitochondrial matrix-facing. Residues 156-183 (RKHMLQALFITISLGVYFTLLQASEYYE) form a helical membrane-spanning segment. Residues 184–190 (TSFTISD) lie on the Mitochondrial intermembrane side of the membrane. Residues 191–223 (GVYGSTFFMATGFHGLHVIIGSTFLIVCFLRQL) traverse the membrane as a helical segment. At 224-232 (YYHFTSNHH) the chain is on the mitochondrial matrix side. The chain crosses the membrane as a helical span at residues 233–256 (FGFEAAAWYWHFVDVVWLFLYVSI). Topologically, residues 257 to 261 (YWWGS) are mitochondrial intermembrane.

Belongs to the cytochrome c oxidase subunit 3 family. Component of the cytochrome c oxidase (complex IV, CIV), a multisubunit enzyme composed of 14 subunits. The complex is composed of a catalytic core of 3 subunits MT-CO1, MT-CO2 and MT-CO3, encoded in the mitochondrial DNA, and 11 supernumerary subunits COX4I, COX5A, COX5B, COX6A, COX6B, COX6C, COX7A, COX7B, COX7C, COX8 and NDUFA4, which are encoded in the nuclear genome. The complex exists as a monomer or a dimer and forms supercomplexes (SCs) in the inner mitochondrial membrane with NADH-ubiquinone oxidoreductase (complex I, CI) and ubiquinol-cytochrome c oxidoreductase (cytochrome b-c1 complex, complex III, CIII), resulting in different assemblies (supercomplex SCI(1)III(2)IV(1) and megacomplex MCI(2)III(2)IV(2)).

The protein localises to the mitochondrion inner membrane. It catalyses the reaction 4 Fe(II)-[cytochrome c] + O2 + 8 H(+)(in) = 4 Fe(III)-[cytochrome c] + 2 H2O + 4 H(+)(out). In terms of biological role, component of the cytochrome c oxidase, the last enzyme in the mitochondrial electron transport chain which drives oxidative phosphorylation. The respiratory chain contains 3 multisubunit complexes succinate dehydrogenase (complex II, CII), ubiquinol-cytochrome c oxidoreductase (cytochrome b-c1 complex, complex III, CIII) and cytochrome c oxidase (complex IV, CIV), that cooperate to transfer electrons derived from NADH and succinate to molecular oxygen, creating an electrochemical gradient over the inner membrane that drives transmembrane transport and the ATP synthase. Cytochrome c oxidase is the component of the respiratory chain that catalyzes the reduction of oxygen to water. Electrons originating from reduced cytochrome c in the intermembrane space (IMS) are transferred via the dinuclear copper A center (CU(A)) of subunit 2 and heme A of subunit 1 to the active site in subunit 1, a binuclear center (BNC) formed by heme A3 and copper B (CU(B)). The BNC reduces molecular oxygen to 2 water molecules using 4 electrons from cytochrome c in the IMS and 4 protons from the mitochondrial matrix. The sequence is that of Cytochrome c oxidase subunit 3 (MT-CO3) from Canis lupus familiaris (Dog).